We begin with the raw amino-acid sequence, 370 residues long: Phospho-N-acetylmuramoyl-pentapeptide-transferase (370 aa).

A run of 10 helical transmembrane segments spans residues 31–51 (LTSM…LYGL), 73–93 (TMGG…WGNL), 98–118 (IIVL…DDYM), 135–155 (LLSI…TGVI), 177–197 (GPVL…IIGS), 209–229 (GLAT…AYVS), 251–271 (VFLS…AHPA), 273–293 (VFMG…IVIL), 298–318 (ILLL…ILQV), and 347–367 (KIVI…LSTL).

It belongs to the glycosyltransferase 4 family. MraY subfamily. Mg(2+) is required as a cofactor.

It is found in the cell inner membrane. The enzyme catalyses UDP-N-acetyl-alpha-D-muramoyl-L-alanyl-gamma-D-glutamyl-meso-2,6-diaminopimeloyl-D-alanyl-D-alanine + di-trans,octa-cis-undecaprenyl phosphate = di-trans,octa-cis-undecaprenyl diphospho-N-acetyl-alpha-D-muramoyl-L-alanyl-D-glutamyl-meso-2,6-diaminopimeloyl-D-alanyl-D-alanine + UMP. It participates in cell wall biogenesis; peptidoglycan biosynthesis. In terms of biological role, catalyzes the initial step of the lipid cycle reactions in the biosynthesis of the cell wall peptidoglycan: transfers peptidoglycan precursor phospho-MurNAc-pentapeptide from UDP-MurNAc-pentapeptide onto the lipid carrier undecaprenyl phosphate, yielding undecaprenyl-pyrophosphoryl-MurNAc-pentapeptide, known as lipid I. This Leptospira borgpetersenii serovar Hardjo-bovis (strain JB197) protein is Phospho-N-acetylmuramoyl-pentapeptide-transferase.